The sequence spans 342 residues: Polygalacturonase inhibitor 1 (342 aa).

The signal sequence occupies residues 1 to 29 (MTQFNIPVTMSSSLSIILVILVSLRTALS). 2 disulfides stabilise this stretch: C32–C62 and C63–C72. An N-linked (GlcNAc...) asparagine glycan is attached at N64. LRR repeat units follow at residues 82-107 (NNLD…LPYL), 108-132 (NFLY…LTQL), 133-156 (HYLY…IKTL), 157-180 (VTLD…LPNL), 181-205 (GGIT…SKLF), 206-228 (TAMT…NLNL), 229-252 (AFVD…DKNT), 253-275 (KKIH…SKNL), 276-299 (NGLD…LKFL), and 300-319 (QSLN…GGNL). N-linked (GlcNAc...) asparagine glycosylation occurs at N141. An N-linked (GlcNAc...) asparagine glycan is attached at N303. 2 cysteine pairs are disulfide-bonded: C310–C332 and C334–C341.

Belongs to the polygalacturonase-inhibiting protein family.

Its subcellular location is the secreted. The protein localises to the cell wall. The protein resides in the membrane. Its function is as follows. Inhibitor of fungal polygalacturonase. It is an important factor for plant resistance to phytopathogenic fungi. Substrate preference is polygalacturonase (PG) from A.niger &gt;&gt; PG of F.oxysporum, A.solani or B.cinerea. Not active on PG from F.moniliforme. This is Polygalacturonase inhibitor 1 (PGIP1) from Phaseolus vulgaris (Kidney bean).